The chain runs to 210 residues: Large ribosomal subunit protein uL3 (210 aa).

Residues 133–152 are disordered; that stretch reads ATHGNSLSHRVHGSTGQNQT. Gln-151 is modified (N5-methylglutamine).

This sequence belongs to the universal ribosomal protein uL3 family. In terms of assembly, part of the 50S ribosomal subunit. Forms a cluster with proteins L14 and L19. In terms of processing, methylated by PrmB.

Its function is as follows. One of the primary rRNA binding proteins, it binds directly near the 3'-end of the 23S rRNA, where it nucleates assembly of the 50S subunit. This chain is Large ribosomal subunit protein uL3, found in Francisella tularensis subsp. holarctica (strain FTNF002-00 / FTA).